We begin with the raw amino-acid sequence, 1275 residues long: Streptococcal hemoprotein receptor (1275 aa).

An N-terminal signal peptide occupies residues 1-26; sequence MKKISKCAFVAISALVLIQATQTVKS. The segment at 61-123 is HID 1; sequence GKEYYKHIEK…KKDGDILITF (63 aa). Heme is bound by residues Thr87, Arg196, Tyr197, and Met238. The tract at residues 203-269 is HID 2; the sequence is IKALTQQITK…KGFEDVTITV (67 aa). The NEAT 1 domain occupies 369 to 501; that stretch reads LTEGTYTLNF…DMTFSKTVTK (133 aa). LRR repeat units lie at residues 544–567, 568–590, 592–614, 616–638, 639–662, 664–686, 687–710, 712–733, 734–757, 759–781, and 783–804; these read LEQI…LKHA, KNIT…LFSQ, KQLR…TFKS, AQLR…LFQS, LHHL…PFEG, SRLT…ALEP, LTSL…IEKL, ALST…SFKN, LPKL…IFKQ, NQLT…VFPD, and ETLN…VRAL. In terms of domain architecture, NEAT 2 spans 976 to 1138; the sequence is LRDGIYYLNA…TTEKAKVVKE (163 aa). Disordered regions lie at residues 1137 to 1174, 1186 to 1205, and 1210 to 1248; these read KETN…SAAT, KATG…DKAE, and LVRD…ESSS. Residues 1138–1166 are compositionally biased toward polar residues; sequence ETNNPQENSHLTSTDQLKGPQNRQQEKTP. Basic and acidic residues-rich tracts occupy residues 1196-1205 and 1210-1229; these read SKTDDTDKAE and LVRD…TKTK. The chain crosses the membrane as a helical span at residues 1250-1269; the sequence is YHLIAGLSSFMIVALGFIIG.

The protein localises to the cell membrane. Its activity is regulated as follows. May modulate heme uptake according to heme availability. In the presence of high heme concentrations, NEAT 1 facilitates fast heme delivery to Shp, whereas NEAT 2 serves as a temporary storage for heme on the bacterial surface. When heme availability is limiting, heme from NEAT 2 is transferred back to NEAT 1 and from there to Shp. In terms of biological role, hemoprotein receptor that plays a central role in the acquisition of host heme, a source of iron during bacterial infection, and is therefore an important virulence factor. Captures host hemoproteins and their iron-containing heme molecules, and transfers the heme to the cell surface heme-binding protein Shp. Plays a pivotal role in iron acquisition and growth under iron-starvation conditions. Uses a cap and release mechanism in which Shr forms a dynamic complex with hemoglobin that enables the gated release of its most labile heme molecule. This mechanism exploits the hemoglobin beta subunit's inherent weaker affinity for heme, allowing S.pyogenes to preferentially capture only heme-saturated forms of hemoglobin that contain iron. In vitro, binds directly to a variety of heme-containing proteins, including hemoglobin, myoglobin, heme albumin and the hemoglobin-haptoglobin complex. It also binds to and acquires heme from methemoglobin, the ferric form of hemoglobin, which is likely to be a physiologically relevant heme source for the hemolytic group A streptococcus (GAS). Seems to have an inherent ability to reduce the ferric heme present in methemoglobin to ferrous heme and to provide a stable environment for the produced ferrous complex. Does not bind apohemoglobin, apohaptoglobin, fibrinogen or streptavidin, indicating that it specifically recognizes hemoproteins. Its function is as follows. In addition to its role in heme acquisition, functions as an adhesin, contributing to host cell adhesion and hence virulence. Specifically binds to extracellular matrix (ECM) components, including fibronectin and laminin, and mediates bacterial attachment to host epithelial cells. In Streptococcus pyogenes serotype M1, this protein is Streptococcal hemoprotein receptor.